The chain runs to 33 residues: Maurocalcin (33 aa).

Intrachain disulfides connect C3–C17, C10–C21, and C16–C32. The segment at 22–24 (KRR) is essential for stimulation of [3H]ryanodine binding to RYR.

This sequence belongs to the scorpion calcin family. Post-translationally, the non-natural D-maurocalcin (a chiral analog of maurocalcin composed of D-amino acids) completely loses the ability to stimulate [3H]ryanodine binding and calcium release. Its protease resistance, combined with its efficient cell penetration at concentrations devoid of cell toxicity, suggests that it should be an excellent vector for in vivo applications. Expressed by the venom gland.

The protein resides in the secreted. Its function is as follows. This toxin stabilizes ryanodine receptor 1 (RyR1) opening in a long-lasting subconductance state (48%-60% of the full conductance state). Furthermore, it triggers calcium release from sarcoplasmic vesicles (6.6 nM are enough to induce a sharp release, and 60% of the total calcium is released after toxin (100 nM) addition) probably by acting as a cell-penetrating peptide (CPP). In addition, it has been shown to dose-dependently stimulate ryanodine binding to RyR1 (EC(50)=12.5-26.4 nM). It also augments the bell-shaped calcium-[3H]ryanodine binding curve that is maximal at about 10 uM calcium concentration. It binds a different site as ryanodine. It acts synergistically with caffeine. In vivo, intracerebroventricular injection into mice causes death. The polypeptide is Maurocalcin (Scorpio palmatus (Israeli golden scorpion)).